We begin with the raw amino-acid sequence, 180 residues long: Secreted RxLR effector protein 19 (180 aa).

Positions 1–19 (MKLLLRALATFVLLNGVDS) are cleaved as a signal peptide. Positions 25 to 171 (FQKCNVTGGP…IFALGALWGP (147 aa)) constitute a Jacalin-type lectin domain. The RxLR-dEER signature appears at 52-77 (RALRLCGVDFVDGIGVTIWDLSVEEN).

Belongs to the RxLR effector family.

It localises to the secreted. The protein localises to the host cytoplasm. Its subcellular location is the host nucleus. Effector that partially suppresses the tobacco programmed cell death induced by cell death-inducing proteins. The chain is Secreted RxLR effector protein 19 from Plasmopara viticola (Downy mildew of grapevine).